The sequence spans 612 residues: Protein lin-61 (612 aa).

4 MBT repeats span residues 143–249 (YLWE…MDKI), 263–380 (NDMV…GYQL), 381–501 (NAKK…LVPP), and 508–607 (FRWD…LQPP).

In terms of assembly, interacts preferentially with histone H3 that is dimethylated or trimethylated at 'Lys-9'.

Its subcellular location is the nucleus. The protein resides in the chromosome. In terms of biological role, synthetic multivulva class B (synMuvB) protein required to repress the induction of vulval development by Ras signaling. Unlike other synMuv proteins it does not associate with the multiprotein DRM complex and the NuRD-like complex. Interaction with methylated histone H3 is essential for vulva development. It has a role in maintaining genome stability. The protein is Protein lin-61 (lin-61) of Caenorhabditis elegans.